A 281-amino-acid polypeptide reads, in one-letter code: Probable splicing factor, arginine/serine-rich 2 (281 aa).

Residues 2 to 72 (VRVYIGRLPN…ERVILEFPRR (71 aa)) form the RRM 1 domain. Basic and acidic residues-rich tracts occupy residues 78-97 (EERS…KGGE) and 168-190 (KLQG…DRSR). Disordered regions lie at residues 78-100 (EERS…ERQF) and 168-281 (KLQG…SASP). One can recognise an RRM 2 domain in the interval 112–186 (FRLVIDNLST…RKLKCTDETR (75 aa)). The span at 191 to 215 (SRSPRRRSRSRSPTRSRSPPARRRS) shows a compositional bias: basic residues. Basic and acidic residues predominate over residues 216-225 (PGSDRSDRKS). The span at 245–254 (RSRSGGRRSR) shows a compositional bias: basic residues.

It belongs to the splicing factor SR family. In terms of processing, extensively phosphorylated on serine residues in the RS domain.

The protein resides in the nucleus. Plays a functionally redundant role in spermatogenesis and growth rate control. Required for the development of somatic gonad structures and for progression from larval stage to adulthood. The protein is Probable splicing factor, arginine/serine-rich 2 (rsp-2) of Caenorhabditis elegans.